We begin with the raw amino-acid sequence, 165 residues long: MTKPPEQDDSNNRIVAVTLDEESIGRSGPDIEHERAIAIYDLIEQNLFAPEGADGKGPFTLHIGITGNRLMFDIRREDGAPVVVHLLSLGPFRGIVKDYFMICDSYYQAIRTATPDKIEAIDMGRRGIHDEGSRTLQERLKGKVRVDFETSRRLFTLITVLHWKG.

Belongs to the UPF0262 family.

This Bradyrhizobium diazoefficiens (strain JCM 10833 / BCRC 13528 / IAM 13628 / NBRC 14792 / USDA 110) protein is UPF0262 protein blr1257.